A 353-amino-acid polypeptide reads, in one-letter code: Ribosomal RNA small subunit methyltransferase H (353 aa).

S-adenosyl-L-methionine contacts are provided by residues 49-51 (GGH), aspartate 68, phenylalanine 95, aspartate 126, and glutamine 133.

The protein belongs to the methyltransferase superfamily. RsmH family.

It localises to the cytoplasm. It catalyses the reaction cytidine(1402) in 16S rRNA + S-adenosyl-L-methionine = N(4)-methylcytidine(1402) in 16S rRNA + S-adenosyl-L-homocysteine + H(+). In terms of biological role, specifically methylates the N4 position of cytidine in position 1402 (C1402) of 16S rRNA. The protein is Ribosomal RNA small subunit methyltransferase H of Corynebacterium urealyticum (strain ATCC 43042 / DSM 7109).